The primary structure comprises 457 residues: F-box/LRR-repeat protein At3g62440 (457 aa).

One can recognise an F-box domain in the interval 1 to 49; the sequence is MDRISNLPDEIICHIGSFLSAREAAFTTVLSKRWHNLFTIVPDLHFDSS. LRR repeat units lie at residues 53–79, 147–174, 177–202, 229–254, 283–310, and 337–362; these read GESL…SLKW, LSLG…SLYH, FYEF…TVCG, WDAF…YYSD, WGKG…NLYT, and LSNF…NIDG.

This chain is F-box/LRR-repeat protein At3g62440, found in Arabidopsis thaliana (Mouse-ear cress).